The sequence spans 213 residues: Large ribosomal subunit protein uL3 (213 aa).

Belongs to the universal ribosomal protein uL3 family. As to quaternary structure, part of the 50S ribosomal subunit. Forms a cluster with proteins L14 and L19.

In terms of biological role, one of the primary rRNA binding proteins, it binds directly near the 3'-end of the 23S rRNA, where it nucleates assembly of the 50S subunit. The polypeptide is Large ribosomal subunit protein uL3 (Petrotoga mobilis (strain DSM 10674 / SJ95)).